The following is a 258-amino-acid chain: Phosphoadenosine 5'-phosphosulfate reductase (258 aa).

The active-site Nucleophile; cysteine thiosulfonate intermediate is the cysteine 244.

This sequence belongs to the PAPS reductase family. CysH subfamily.

It localises to the cytoplasm. The catalysed reaction is [thioredoxin]-disulfide + sulfite + adenosine 3',5'-bisphosphate + 2 H(+) = [thioredoxin]-dithiol + 3'-phosphoadenylyl sulfate. The protein operates within sulfur metabolism; hydrogen sulfide biosynthesis; sulfite from sulfate: step 3/3. Its function is as follows. Catalyzes the formation of sulfite from phosphoadenosine 5'-phosphosulfate (PAPS) using thioredoxin as an electron donor. The protein is Phosphoadenosine 5'-phosphosulfate reductase of Vibrio atlanticus (strain LGP32) (Vibrio splendidus (strain Mel32)).